A 1245-amino-acid chain; its full sequence is Structural polyprotein (1245 aa).

The tract at residues 1–106 (MNRGFFNMLG…KTKPGKRQRM (106 aa)) is disordered. Residues 37–70 (GLASQIQQLTTAVSALVIGQATRPQNPRPRPPPR) form a host transcription inhibition region. Residues 38–49 (LASQIQQLTTAV) are compositionally biased toward polar residues. Residues 63–100 (PRPRPPPRQKKQAPKQPPKPKKPKPQEKKKKQPAKTKP) carry the Nuclear localization signal motif. Residues 67 to 106 (PPPRQKKQAPKQPPKPKKPKPQEKKKKQPAKTKPGKRQRM) show a composition bias toward basic residues. The tract at residues 86-115 (KPQEKKKKQPAKTKPGKRQRMALKLEADRL) is binding to the viral RNA. The ribosome-binding stretch occupies residues 100 to 114 (PGKRQRMALKLEADR). A Peptidase S3 domain is found at 114–264 (RLFDVKNEDG…KTTPEGTEEW (151 aa)). Residue His141 is the Charge relay system of the active site. The short motif at 146-156 (IDHPVLSKLKF) is the Nuclear export signal element. The interval 157–162 (TKSSAY) is interaction with spike glycoprotein E2. Asp163 acts as the Charge relay system in catalysis. Positions 185-195 (PEGFYNWHHGA) are dimerization of the capsid protein. Catalysis depends on Ser215, which acts as the Charge relay system. The interval 221–225 (DNSGR) is dimerization of the capsid protein. The interaction with spike glycoprotein E2 stretch occupies residues 249-253 (SKGKT). Residues 265-279 (SAAPLVTAMCLLGNV) form a functions as an uncleaved signal peptide for the precursor of protein E3/E2 region. Asn278 is a glycosylation site (N-linked (GlcNAc...) asparagine; by host). Disulfide bonds link Cys283/Cys289, Cys480/Cys594, Cys529/Cys554, and Cys531/Cys548. At 329–690 (SVTDDFTLTS…HEIVQHYYHR (362 aa)) the chain is on the extracellular side. N-linked (GlcNAc...) asparagine; by host glycosylation is present at Asn524. N-linked (GlcNAc...) asparagine; by host glycosylation is present at Asn646. A helical transmembrane segment spans residues 691 to 718 (HPVYTILAVASAAVAMMIGVTVAALCAC). The segment at 719 to 723 (KARRE) is interaction with the capsid protein. Topologically, residues 719-751 (KARRECLTPYALAPNAVIPTSLALLCCVRSANA) are cytoplasmic. Residues Cys724, Cys744, and Cys745 are each lipidated (S-palmitoyl cysteine; by host). The cysteines at positions 724 and 745 are disulfide-linked. Over 752–763 (ETFTETMSYFWS) the chain is Extracellular. A helical membrane pass occupies residues 764–784 (NSQPFFWVQLCIPLAAVIVLM). Residue Arg785 is a topological domain, cytoplasmic. Residues 786-806 (CCSCCLPFLVVAGAYLAKVDA) form a helical membrane-spanning segment. Residues 807–1214 (YEHATTVPNV…QAAISKTSWS (408 aa)) lie on the Extracellular side of the membrane. Disulfide bonds link Cys855–Cys920, Cys868–Cys900, Cys869–Cys902, and Cys874–Cys884. The segment at 890-907 (VYPFMWGGAQCFCDSENS) is E1 fusion peptide loop. 2 N-linked (GlcNAc...) asparagine; by host glycosylation sites follow: Asn945 and Asn1051. Cystine bridges form between Cys1065-Cys1077, Cys1107-Cys1182, Cys1112-Cys1186, and Cys1134-Cys1176. Residues 1215–1239 (WLFALFGGASSLLIIGLTIFACSMM) traverse the membrane as a helical segment. At 1240–1245 (LTSTRR) the chain is on the cytoplasmic side.

As to quaternary structure, homodimer. Homomultimer. Interacts with host karyopherin KPNA4; this interaction allows the nuclear import of the viral capsid protein. Interacts with spike glycoprotein E2. Interacts with host IRAK1; the interaction leads to inhibition of IRAK1-dependent signaling. In terms of assembly, the precursor of protein E3/E2 and E1 form a heterodimer shortly after synthesis. The precursor of protein E3/E2 and E1 form a heterodimer shortly after synthesis. Processing of the precursor of protein E3/E2 into E2 and E3 results in a heterodimer of the spike glycoproteins E2 and E1. Spike at virion surface are constituted of a trimer of E2-E1 heterodimers. After target cell attachment and endocytosis, E1 change conformation to form homotrimers. E2-E1 heterodimers interact with host VLDLR or LRP8/APOER2 to mediate viral entry. Interacts with 6K protein. As to quaternary structure, processing of the precursor of protein E3/E2 into E2 and E3 results in a heterodimer of the spike glycoproteins E2 and E1. Spike at virion surface are constituted of a trimer of E2-E1 heterodimers. E2-E1 heterodimers interact with host VLDLR or LRP8/APOER2 to mediate viral entry. Interacts with 6K protein. Interacts with the capsid protein. In terms of assembly, oligomer. Interacts with spike glycoprotein E1. Interacts with spike glycoprotein E2. Post-translationally, structural polyprotein: Specific enzymatic cleavages in vivo yield mature proteins. Capsid protein is auto-cleaved during polyprotein translation, unmasking a signal peptide at the N-terminus of the precursor of E3/E2. The remaining polyprotein is then targeted to the host endoplasmic reticulum, where host signal peptidase cleaves it into pE2, 6K and E1 proteins. pE2 is further processed to mature E3 and E2 by host furin in trans-Golgi vesicle. Palmitoylated via thioester bonds. These palmitoylations may induce disruption of the C-terminus transmembrane. This would result in the reorientation of E2 C-terminus from lumenal to cytoplasmic side. In terms of processing, N-glycosylated. Post-translationally, palmitoylated via thioester bonds.

The protein resides in the virion. Its subcellular location is the host cytoplasm. The protein localises to the host cell membrane. It is found in the host nucleus. It localises to the virion membrane. The protein resides in the host Golgi apparatus. Its subcellular location is the host trans-Golgi network. The protein localises to the host endoplasmic reticulum. The catalysed reaction is Autocatalytic release of the core protein from the N-terminus of the togavirus structural polyprotein by hydrolysis of a -Trp-|-Ser- bond.. In terms of biological role, forms an icosahedral capsid with a T=4 symmetry composed of 240 copies of the capsid protein surrounded by a lipid membrane through which penetrate 80 spikes composed of trimers of E1-E2 heterodimers. The capsid protein binds to the viral RNA genome at a site adjacent to a ribosome binding site for viral genome translation following genome release. Possesses a protease activity that results in its autocatalytic cleavage from the nascent structural protein. Following its self-cleavage, the capsid protein transiently associates with ribosomes, and within several minutes the protein binds to viral RNA and rapidly assembles into icosahedric core particles. The resulting nucleocapsid eventually associates with the cytoplasmic domain of the spike glycoprotein E2 at the cell membrane, leading to budding and formation of mature virions. In case of infection, new virions attach to target cells and after clathrin-mediated endocytosis their membrane fuses with the host endosomal membrane. This leads to the release of the nucleocapsid into the cytoplasm, followed by an uncoating event necessary for the genomic RNA to become accessible. The uncoating might be triggered by the interaction of capsid proteins with ribosomes. Binding of ribosomes would release the genomic RNA since the same region is genomic RNA-binding and ribosome-binding. Specifically inhibits interleukin-1 receptor-associated kinase 1/IRAK1-dependent signaling during viral entry, representing a means by which the alphaviruses may evade innate immune detection and activation prior to viral gene expression. Its function is as follows. Provides the signal sequence for the translocation of the precursor of protein E3/E2 to the host endoplasmic reticulum. Furin-cleaved E3 remains associated with spike glycoprotein E1 and mediates pH protection of the latter during the transport via the secretory pathway. After virion release from the host cell, the assembly protein E3 is gradually released in the extracellular space. Plays a role in viral attachment to target host cell, by binding to the cell receptors VLDLR or LRP8/APOER2. Synthesized as a pE2 precursor which is processed by furin at the cell membrane just before virion budding, giving rise to E2-E1 heterodimer. The pE2-E1 heterodimer is stable, whereas E2-E1 is unstable and dissociate at low pH. pE2 is processed at the last step, presumably to avoid E1 fusion activation before its final export to cell surface. E2 C-terminus contains a transitory transmembrane that would be disrupted by palmitoylation, resulting in reorientation of the C-terminal tail from lumenal to cytoplasmic side. This step is critical since E2 C-terminus is involved in budding by interacting with capsid proteins. This release of E2 C-terminus in cytoplasm occurs lately in protein export, and precludes premature assembly of particles at the endoplasmic reticulum membrane. Functionally, acts as a viroporin that participates in virus glycoprotein processing and transport to the plasma membrane, cell permeabilization and budding of viral particles. Disrupts the calcium homeostasis of the cell, probably at the endoplasmic reticulum level resulting in the increased levels of cytoplasmic calcium. Because of its lipophilic properties, the 6K protein is postulated to influence the selection of lipids that interact with the transmembrane domains of the glycoproteins, which, in turn, affects the deformability of the bilayer required for the extreme curvature that occurs as budding proceeds. Present in low amount in virions, about 3% compared to viral glycoproteins. In terms of biological role, class II viral fusion protein. Fusion activity is inactive as long as E1 is bound to E2 in mature virion. After virus attachment to target cell via host VLDLR or LRP8/APOER2 and endocytosis, acidification of the endosome induces dissociation of E1/E2 heterodimer and concomitant trimerization of the E1 subunits. This E1 trimer is fusion active, and promotes release of viral nucleocapsid in cytoplasm after endosome and viral membrane fusion. Efficient fusion requires the presence of cholesterol and sphingolipid in the target membrane. In Acrocephalus scirpaceus (Eurasian reed-warbler), this protein is Structural polyprotein.